A 224-amino-acid chain; its full sequence is PKHD-type hydroxylase Shewmr4_3244 (224 aa).

Residues 78–176 form the Fe2OG dioxygenase domain; that stretch reads QFYPPLFNRY…RTAAFMWLQS (99 aa). Fe cation is bound by residues H96, D98, and H157. Position 167 (R167) interacts with 2-oxoglutarate.

Fe(2+) is required as a cofactor. The cofactor is L-ascorbate.

This Shewanella sp. (strain MR-4) protein is PKHD-type hydroxylase Shewmr4_3244.